The following is a 413-amino-acid chain: Glucose-1-phosphate adenylyltransferase (413 aa).

Alpha-D-glucose 1-phosphate-binding positions include tyrosine 102, glycine 167, 182–183 (EK), and serine 200.

The protein belongs to the bacterial/plant glucose-1-phosphate adenylyltransferase family. In terms of assembly, homotetramer.

It catalyses the reaction alpha-D-glucose 1-phosphate + ATP + H(+) = ADP-alpha-D-glucose + diphosphate. It participates in glycan biosynthesis; glycogen biosynthesis. In terms of biological role, involved in the biosynthesis of ADP-glucose, a building block required for the elongation reactions to produce glycogen. Catalyzes the reaction between ATP and alpha-D-glucose 1-phosphate (G1P) to produce pyrophosphate and ADP-Glc. This Deinococcus geothermalis (strain DSM 11300 / CIP 105573 / AG-3a) protein is Glucose-1-phosphate adenylyltransferase.